A 101-amino-acid chain; its full sequence is NADH-quinone oxidoreductase subunit K (101 aa).

3 helical membrane-spanning segments follow: residues L4–L24, I30–F50, and I61–L81.

This sequence belongs to the complex I subunit 4L family. As to quaternary structure, NDH-1 is composed of 14 different subunits. Subunits NuoA, H, J, K, L, M, N constitute the membrane sector of the complex.

Its subcellular location is the cell inner membrane. It catalyses the reaction a quinone + NADH + 5 H(+)(in) = a quinol + NAD(+) + 4 H(+)(out). Functionally, NDH-1 shuttles electrons from NADH, via FMN and iron-sulfur (Fe-S) centers, to quinones in the respiratory chain. The immediate electron acceptor for the enzyme in this species is believed to be ubiquinone. Couples the redox reaction to proton translocation (for every two electrons transferred, four hydrogen ions are translocated across the cytoplasmic membrane), and thus conserves the redox energy in a proton gradient. This is NADH-quinone oxidoreductase subunit K from Paraburkholderia xenovorans (strain LB400).